The chain runs to 231 residues: NADH-ubiquinone oxidoreductase chain 4 (231 aa).

6 helical membrane passes run 1–21 (PIAG…YGII), 34–54 (TFLP…LTCL), 61–80 (SLIA…AIII), 84–106 (WGLS…LFCL), 118–138 (ILIL…WWLL), and 156–178 (LLIM…LSML).

This sequence belongs to the complex I subunit 4 family.

The protein resides in the mitochondrion membrane. It catalyses the reaction a ubiquinone + NADH + 5 H(+)(in) = a ubiquinol + NAD(+) + 4 H(+)(out). Functionally, core subunit of the mitochondrial membrane respiratory chain NADH dehydrogenase (Complex I) that is believed to belong to the minimal assembly required for catalysis. Complex I functions in the transfer of electrons from NADH to the respiratory chain. The immediate electron acceptor for the enzyme is believed to be ubiquinone. The chain is NADH-ubiquinone oxidoreductase chain 4 (MT-ND4) from Trimeresurus albolabris (White-lipped pit viper).